Consider the following 401-residue polypeptide: Phosphoglycerate kinase 3, cytosolic (401 aa).

Residues Val-24, Asp-25, Asn-27, Arg-41, Ser-63, His-64, Gly-66, Arg-67, Arg-122, His-154, and Arg-155 each coordinate (2R)-3-phosphoglycerate. Gly-200 serves as a coordination point for ADP. Position 200 (Gly-200) interacts with CDP. Residues Lys-202 and Lys-206 each coordinate AMP. An ATP-binding site is contributed by Lys-206. Gly-224 is an ADP binding site. Gly-224 is a binding site for CDP. Residues Gly-225 and Gly-297 each coordinate AMP. ATP is bound by residues Gly-225, Gly-297, and Asn-321. Residues Gly-322 and Phe-327 each contribute to the CDP site. Phe-327 is a binding site for ADP. Residue Glu-328 participates in AMP binding. The ATP site is built by Glu-328, Asp-359, and Ser-360. Asp-359 contacts Mg(2+).

It belongs to the phosphoglycerate kinase family. In terms of assembly, monomer. Mg(2+) serves as cofactor. As to expression, expressed in roots, leaves and inflorescence.

The protein localises to the cytoplasm. It catalyses the reaction (2R)-3-phosphoglycerate + ATP = (2R)-3-phospho-glyceroyl phosphate + ADP. It participates in carbohydrate degradation; glycolysis; pyruvate from D-glyceraldehyde 3-phosphate: step 2/5. This is Phosphoglycerate kinase 3, cytosolic from Arabidopsis thaliana (Mouse-ear cress).